The following is a 104-amino-acid chain: Chromogranin-A (104 aa).

An intrachain disulfide couples Cys-17 to Cys-38.

It belongs to the chromogranin/secretogranin protein family. In terms of assembly, dimer.

The protein localises to the cytoplasmic vesicle. Its subcellular location is the secretory vesicle. The protein resides in the secreted. Its function is as follows. Chromogranin A probably has a paracrine role in the regulation of secretion or maturation. The polypeptide is Chromogranin-A (CHGA) (Struthio camelus (Common ostrich)).